The following is a 408-amino-acid chain: Peptidase T (408 aa).

Histidine 78 is a binding site for Zn(2+). The active site involves aspartate 80. Aspartate 141 contributes to the Zn(2+) binding site. Glutamate 175 (proton acceptor) is an active-site residue. Residues glutamate 176, aspartate 198, and histidine 380 each coordinate Zn(2+).

It belongs to the peptidase M20B family. It depends on Zn(2+) as a cofactor.

It localises to the cytoplasm. The enzyme catalyses Release of the N-terminal residue from a tripeptide.. In terms of biological role, cleaves the N-terminal amino acid of tripeptides. This Clostridium botulinum (strain Langeland / NCTC 10281 / Type F) protein is Peptidase T.